The primary structure comprises 496 residues: Guanosine-5'-triphosphate,3'-diphosphate pyrophosphatase (496 aa).

This sequence belongs to the GppA/Ppx family. GppA subfamily.

The enzyme catalyses guanosine 3'-diphosphate 5'-triphosphate + H2O = guanosine 3',5'-bis(diphosphate) + phosphate + H(+). It functions in the pathway purine metabolism; ppGpp biosynthesis; ppGpp from GTP: step 2/2. Functionally, catalyzes the conversion of pppGpp to ppGpp. Guanosine pentaphosphate (pppGpp) is a cytoplasmic signaling molecule which together with ppGpp controls the 'stringent response', an adaptive process that allows bacteria to respond to amino acid starvation, resulting in the coordinated regulation of numerous cellular activities. This is Guanosine-5'-triphosphate,3'-diphosphate pyrophosphatase from Aeromonas hydrophila subsp. hydrophila (strain ATCC 7966 / DSM 30187 / BCRC 13018 / CCUG 14551 / JCM 1027 / KCTC 2358 / NCIMB 9240 / NCTC 8049).